We begin with the raw amino-acid sequence, 34 residues long: Stromal 70 kDa heat shock-related protein, chloroplastic (34 aa).

The protein belongs to the heat shock protein 70 family.

Its subcellular location is the plastid. It is found in the chloroplast stroma. In terms of biological role, interacts with newly imported chloroplast proteins to assist in their maturation. The chain is Stromal 70 kDa heat shock-related protein, chloroplastic from Cucurbita maxima (Pumpkin).